A 334-amino-acid polypeptide reads, in one-letter code: Leucine-rich repeat-containing protein 26 (334 aa).

An N-terminal signal peptide occupies residues 1–26 (MRGPSWSRPRPLLLLLLLLSPWPVWA). Topologically, residues 27–261 (QVSATASPSG…HCAQPLALRD (235 aa)) are extracellular. The region spanning 34–71 (PSGSLGAPDCPEVCTCVPGGLASCSALSLPAVPPGLSL) is the LRRNT domain. 2 disulfide bridges follow: Cys43–Cys49 and Cys47–Cys57. LRR repeat units lie at residues 72–93 (RLRA…AFAG), 96–117 (ALQR…AFWG), 120–141 (ALQL…TFAP), 144–167 (ALRN…GALP), and 168–190 (LLRS…LGRL). N-linked (GlcNAc...) asparagine glycosylation occurs at Asn147. Positions 201 to 255 (NPWGCGCALRPLCAWLRRHPLPASEAETVLCVWPGRLTLSPLTAFSDAAFSHCAQ) constitute an LRRCT domain. 2 cysteine pairs are disulfide-bonded: Cys205-Cys231 and Cys207-Cys253. The chain crosses the membrane as a helical span at residues 262–282 (LAVVYTLGPASFLVSLASCLA). Topologically, residues 283–334 (LGSGLTACRARRRRLRTAALRPPRPPDPNPDPDPHGCASPADPGSPAAAAQA) are cytoplasmic. The segment at 298–334 (RTAALRPPRPPDPNPDPDPHGCASPADPGSPAAAAQA) is disordered. The span at 304–313 (PPRPPDPNPD) shows a compositional bias: pro residues. The segment covering 320–334 (ASPADPGSPAAAAQA) has biased composition (low complexity).

In terms of assembly, interacts with KCNMA1. Isoform 1 is expressed highly in normal prostate and salivary gland, very weakly in colon, pancreas, and intestine, and not at all in other tissues. Isoform 1 is expressed highly in many cancer cell lines and in breast cancer, pancreatic cancer and colon cancer. Isoform 2 is expressed in cancer cell lines.

The protein localises to the cell membrane. It localises to the cytoplasm. The protein resides in the cytoskeleton. In terms of biological role, auxiliary protein of the large-conductance, voltage and calcium-activated potassium channel (BK alpha). Required for the conversion of BK alpha channels from a high-voltage to a low-voltage activated channel type in non-excitable cells. These are characterized by negative membrane voltages and constant low levels of calcium. The chain is Leucine-rich repeat-containing protein 26 (LRRC26) from Homo sapiens (Human).